We begin with the raw amino-acid sequence, 257 residues long: Protein-tyrosine-phosphatase IBR5 (257 aa).

Residues 49–185 (FPSEILPEFL…LQEFEQGIFG (137 aa)) form the Tyrosine-protein phosphatase domain. Residue Cys-129 is the Phosphocysteine intermediate of the active site. A disordered region spans residues 235 to 257 (QEFTFGATPPKPTTGGDIAMDGS).

This sequence belongs to the protein-tyrosine phosphatase family. In terms of assembly, interacts with SKP1A/ASK1 and with MPK12. As to expression, expressed in root tips and vasculature, cotyledons, stems, leaves vasculature and hydathodes, flowers, siliques, and seeds.

Its subcellular location is the nucleus. The catalysed reaction is O-phospho-L-tyrosyl-[protein] + H2O = L-tyrosyl-[protein] + phosphate. Functionally, required for the transduction of auxin and abscisic acid (ABA) signaling pathways. Dephosphorylates and inactivates the MAP kinase MPK12. In Arabidopsis thaliana (Mouse-ear cress), this protein is Protein-tyrosine-phosphatase IBR5 (IBR5).